A 299-amino-acid polypeptide reads, in one-letter code: MRIAILSQGPELYSTKRLVEAATLRGHEVKVINPLECYMNINMRQSSIHIGGEELPPFDAVIPRIGASITFYGSAVLRQFEMMGVYALNDSVGISRSRDKLRSMQLMSRRGIGLPITGFANKPSDIPDLIDMVGGAPLVIKLLEGTQGIGVVLAETRKAAESVIEAFMGLKANIMVQEYIKEANGADIRCFVLGDKVIAAMKRQAMPGEFRSNLHRGGTASLVKLTPEERSVAIRAAKTMGLNVAGVDLLRSNHGPVVMEVNSSPGLEGIEGATAKDVAGAIIEFVEKNALKAKKPTQA.

Positions 104–287 constitute an ATP-grasp domain; the sequence is MQLMSRRGIG…VAGAIIEFVE (184 aa). Residues lysine 141, 178 to 179, aspartate 187, and 211 to 213 contribute to the ATP site; these read EY and RSN. The Mg(2+) site is built by aspartate 248, glutamate 260, and asparagine 262. Positions 248, 260, and 262 each coordinate Mn(2+).

This sequence belongs to the RimK family. The cofactor is Mg(2+). Mn(2+) is required as a cofactor.

The sequence is that of Probable alpha-L-glutamate ligase 2 from Shewanella sp. (strain MR-4).